The following is a 442-amino-acid chain: Putative helicase 161L (442 aa).

Positions 88 to 241 (IDILEKNHSV…LFPIFFGKEK (154 aa)) constitute a Helicase ATP-binding domain. 101–108 (CFTGFGKT) is a binding site for ATP. The short motif at 194-197 (DEVH) is the DEAH box element.

It belongs to the DEAD box helicase family. DEAH subfamily.

This chain is Putative helicase 161L, found in Invertebrate iridescent virus 6 (IIV-6).